We begin with the raw amino-acid sequence, 288 residues long: Bifunctional protein FolD (288 aa).

Residues 166–168, serine 191, and isoleucine 232 contribute to the NADP(+) site; that span reads GRS.

Belongs to the tetrahydrofolate dehydrogenase/cyclohydrolase family. As to quaternary structure, homodimer.

The enzyme catalyses (6R)-5,10-methylene-5,6,7,8-tetrahydrofolate + NADP(+) = (6R)-5,10-methenyltetrahydrofolate + NADPH. The catalysed reaction is (6R)-5,10-methenyltetrahydrofolate + H2O = (6R)-10-formyltetrahydrofolate + H(+). It functions in the pathway one-carbon metabolism; tetrahydrofolate interconversion. Functionally, catalyzes the oxidation of 5,10-methylenetetrahydrofolate to 5,10-methenyltetrahydrofolate and then the hydrolysis of 5,10-methenyltetrahydrofolate to 10-formyltetrahydrofolate. The chain is Bifunctional protein FolD from Rickettsia africae (strain ESF-5).